The primary structure comprises 516 residues: High-affinity nitrate transporter 2.3 (516 aa).

12 helical membrane passes run 52–72 (WFSF…LPLI), 76–96 (LGLT…GAVF), 112–132 (LASA…SIIQ), 142–162 (FFTG…SSMF), 172–192 (GVAG…MPLV), 209–229 (IAFF…LAFG), 265–285 (WILA…DNVV), 299–319 (TAGL…PGGG), 335–354 (LWGL…VLGI), 367–387 (VLFS…VPFV), 395–415 (ISGM…YIFF), and 425–445 (GIKY…LIYF). The segment at 489–516 (SVREGGRSSANGGQPRHTVPVDASPAGV) is disordered.

The protein belongs to the major facilitator superfamily. Nitrate/nitrite porter (TC 2.A.1.8) family. Heterotetramer composed of two NRT2.3 and two NAR2.1. Isoform 1 interacts with NAR2.1, but not isoform 2. Expressed in the stelar cells of both primary and lateral roots, particularly at the site of lateral root emergence, root-shoot junction zone, vascular tissues of adventitious root primordia, leaves, germ tips and seed scutellum.

The protein localises to the cell membrane. Involved in nitrate transport, but does not seem to be able to mediate transport by its own. Acts as a dual component transporter with NAR2.1. Imports nitrate with high affinity when expressed with NAR2.1 in a heterologous system (Xenopus oocytes). Plays a key role in long-distance nitrate transport from root to shoot particularly at low external nitrate supply. This chain is High-affinity nitrate transporter 2.3 (NRT2.3), found in Oryza sativa subsp. japonica (Rice).